We begin with the raw amino-acid sequence, 438 residues long: MQVPEIEKQIGITLYSTDTDGLGGQLRQEVEDFIVKEITNREEGQEGKYLILELIKRDWDTHHLTRTLAKILQVSQKRISVAGTKDKRALTTQKISIFDIDAQKIEKIHLKDVELKVLGRSRKSVELGDLWGNNFRITIRNITHSSEEIHKLLEKTTNEILAQNGVPNFFGIQRFGSVRPVTHLVGKAIVEGDFEKAALLYIAEPFPDEPEDTRKARQFVKETLDFKEGLKIYPLHLGHERAMMNHLIANPDDFAGAFLVLPKNLYRMFVHGYQSYIYNIILCRRIEKGLSLNEAVEGDVVCFKNEHGLPDSSKTEKATTETVNAMNRLIKKKRAFITAPLPGHNTEFASGIPGEVEQAVLDELKVPLQGFNIEETPEMSSKGTRRELLLQVEPKFEVAEDELNPGKLKAVLEFMLPKGSYATTVLREYMKVDPLQMS.

Aspartate 86 acts as the Nucleophile in catalysis. A TRUD domain is found at glycine 165–leucine 390.

It belongs to the pseudouridine synthase TruD family.

The catalysed reaction is uridine(13) in tRNA = pseudouridine(13) in tRNA. Functionally, could be responsible for synthesis of pseudouridine from uracil-13 in transfer RNAs. This is Probable tRNA pseudouridine synthase D from Methanosarcina barkeri (strain Fusaro / DSM 804).